The primary structure comprises 747 residues: Myotubularin-related protein 12 (747 aa).

The Myotubularin phosphatase domain maps to phenylalanine 205–tyrosine 643. An interaction with MTM1 region spans residues valine 449–lysine 558. Residues aspartate 548–lysine 575 are disordered. Positions glutamine 562–serine 572 are enriched in polar residues. A phosphoserine mark is found at serine 564 and serine 601.

It belongs to the protein-tyrosine phosphatase family. Non-receptor class myotubularin subfamily. Heterodimer with lipid phosphatase MTM1. Heterodimer with lipid phosphatase MTMR2. In terms of tissue distribution, expressed in skeletal muscles (at protein level).

Its subcellular location is the cytoplasm. The protein localises to the sarcoplasmic reticulum. It localises to the myofibril. The protein resides in the sarcomere. Acts as an adapter for the myotubularin-related phosphatases. Regulates phosphatase MTM1 protein stability and possibly its intracellular location. By stabilizing MTM1 protein levels, required for skeletal muscle maintenance but not for myogenesis. In Mus musculus (Mouse), this protein is Myotubularin-related protein 12 (Mtmr12).